The following is a 429-amino-acid chain: Phosphoglucosamine mutase (429 aa).

The active-site Phosphoserine intermediate is Ser-96. Mg(2+)-binding residues include Ser-96, Asp-230, Asp-232, and Asp-234. Residue Ser-96 is modified to Phosphoserine.

It belongs to the phosphohexose mutase family. Mg(2+) is required as a cofactor. In terms of processing, activated by phosphorylation.

The catalysed reaction is alpha-D-glucosamine 1-phosphate = D-glucosamine 6-phosphate. Functionally, catalyzes the conversion of glucosamine-6-phosphate to glucosamine-1-phosphate. The polypeptide is Phosphoglucosamine mutase (Thermotoga maritima (strain ATCC 43589 / DSM 3109 / JCM 10099 / NBRC 100826 / MSB8)).